A 156-amino-acid polypeptide reads, in one-letter code: Rhombotin-1 (156 aa).

2 LIM zinc-binding domains span residues 22–84 (KGCA…LFGT) and 86–148 (GNCA…GQLN).

Its subcellular location is the nucleus. Functionally, may be involved in gene regulation within neural lineage cells potentially by direct DNA binding or by binding to other transcription factors. This is Rhombotin-1 from Xenopus laevis (African clawed frog).